The primary structure comprises 403 residues: Aspartic protease PEP1 (403 aa).

Residues Met-1 to Ala-20 form the signal peptide. A propeptide spans Ala-21 to Ala-67 (activation peptide). Residues Tyr-82 to Ala-400 form the Peptidase A1 domain. Asp-98 is a catalytic residue. Asn-159 and Asn-270 each carry an N-linked (GlcNAc...) asparagine glycan. Asp-293 is an active-site residue. A disulfide bridge connects residues Cys-329 and Cys-361.

The protein belongs to the peptidase A1 family.

The protein resides in the secreted. It catalyses the reaction Hydrolysis of proteins with broad specificity. Generally favors hydrophobic residues in P1 and P1', but also accepts Lys in P1, which leads to activation of trypsinogen. Does not clot milk.. Secreted aspartic endopeptidase that allows assimilation of proteinaceous substrates. Can catalyze hydrolysis of the major structural proteins of basement membrane, elastin, collagen, and laminin. Thought to play a significant role in virulence. The chain is Aspartic protease PEP1 (PEP1) from Arthroderma benhamiae (strain ATCC MYA-4681 / CBS 112371) (Trichophyton mentagrophytes).